The following is a 356-amino-acid chain: Glucose-1-phosphate thymidylyltransferase (356 aa).

Mg(2+)-binding residues include aspartate 107 and aspartate 221.

The protein belongs to the glucose-1-phosphate thymidylyltransferase family. Requires Mg(2+) as cofactor.

The enzyme catalyses dTTP + alpha-D-glucose 1-phosphate + H(+) = dTDP-alpha-D-glucose + diphosphate. Its pathway is antibiotic biosynthesis. Its function is as follows. Involved in the biosynthesis of the two 2,6-deoxysugars, dTDP-L-oleandrose and dTDP-D-desosamine, attached to the macrolactone ring oleandolide to produce the aglycone antibiotic oleandomycin. Catalyzes the formation of dTDP-glucose from deoxythymidine triphosphate (dTTP) and glucose 1-phosphate. This chain is Glucose-1-phosphate thymidylyltransferase, found in Streptomyces antibioticus.